The sequence spans 588 residues: Adenine deaminase (588 aa).

Belongs to the metallo-dependent hydrolases superfamily. Adenine deaminase family. As to quaternary structure, homodimer. Requires Mn(2+) as cofactor.

It catalyses the reaction adenine + H2O + H(+) = hypoxanthine + NH4(+). This Shigella boydii serotype 4 (strain Sb227) protein is Adenine deaminase.